We begin with the raw amino-acid sequence, 308 residues long: tRNA dimethylallyltransferase (308 aa).

Residue 14 to 21 participates in ATP binding; that stretch reads GPTASGKS. Position 16–21 (16–21) interacts with substrate; it reads TASGKS. The interval 39–42 is interaction with substrate tRNA; sequence DSMQ.

The protein belongs to the IPP transferase family. As to quaternary structure, monomer. Mg(2+) is required as a cofactor.

The catalysed reaction is adenosine(37) in tRNA + dimethylallyl diphosphate = N(6)-dimethylallyladenosine(37) in tRNA + diphosphate. Functionally, catalyzes the transfer of a dimethylallyl group onto the adenine at position 37 in tRNAs that read codons beginning with uridine, leading to the formation of N6-(dimethylallyl)adenosine (i(6)A). The protein is tRNA dimethylallyltransferase of Bradyrhizobium sp. (strain ORS 278).